The sequence spans 610 residues: Glutamine--fructose-6-phosphate aminotransferase [isomerizing] (610 aa).

Cysteine 2 (nucleophile; for GATase activity) is an active-site residue. The Glutamine amidotransferase type-2 domain occupies 2–218 (CGIVGAVAQR…EGDVAEITRR (217 aa)). SIS domains are found at residues 286–426 (AADI…EQGR) and 459–600 (LATD…VDQP). Catalysis depends on lysine 605, which acts as the For Fru-6P isomerization activity.

Homodimer.

Its subcellular location is the cytoplasm. It carries out the reaction D-fructose 6-phosphate + L-glutamine = D-glucosamine 6-phosphate + L-glutamate. In terms of biological role, catalyzes the first step in hexosamine metabolism, converting fructose-6P into glucosamine-6P using glutamine as a nitrogen source. The chain is Glutamine--fructose-6-phosphate aminotransferase [isomerizing] from Vibrio parahaemolyticus serotype O3:K6 (strain RIMD 2210633).